The following is a 410-amino-acid chain: Chaperone protein dnaJ 15 (410 aa).

A J domain is found at 17–82; sequence DPYEVLCVSK…EKRRHYDNAG (66 aa). Positions 284-344 form a coiled coil; the sequence is AKTYEDTTEK…TVDELLKQRD (61 aa). The disordered stretch occupies residues 351–410; that stretch reads SVVKTPSGNNLSNGSSSKAQGDESKGDGDSAGEEGGTENRDKSKRKWFNLNLKGSDKKLG. Low complexity predominate over residues 357–367; the sequence is SGNNLSNGSSS.

This sequence belongs to the DnaJ family. B/II subfamily. Expressed at high levels in root cap, root tip meristematic region and elongation zones, and at lower levels in mature part of roots (at protein level). Constitutively expressed in seedlings, etiolated or not, roots, rosette leaves, cauline leaves, stems, flowers, siliques and pollen.

The protein resides in the cytoplasm. Its subcellular location is the cytoskeleton. The protein localises to the endoplasmic reticulum membrane. It localises to the golgi apparatus membrane. Its function is as follows. Plays a continuous role in plant development probably in the structural organization of compartments. Seems to be involved in early gravitropic signal transduction within the gravity-perceiving cells (statocytes), where it influences pH changes and auxin distribution. Probably affects the localization and/or activity of auxin efflux carrier components (PIN proteins) or other proteins involved in lateral auxin transport. The polypeptide is Chaperone protein dnaJ 15 (ATJ15) (Arabidopsis thaliana (Mouse-ear cress)).